We begin with the raw amino-acid sequence, 214 residues long: Cytochrome c biogenesis ATP-binding export protein CcmA (214 aa).

The ABC transporter domain occupies leucine 12–alanine 214. Glycine 44 to threonine 51 is an ATP binding site.

The protein belongs to the ABC transporter superfamily. CcmA exporter (TC 3.A.1.107) family. In terms of assembly, the complex is composed of two ATP-binding proteins (CcmA) and two transmembrane proteins (CcmB).

Its subcellular location is the cell inner membrane. It catalyses the reaction heme b(in) + ATP + H2O = heme b(out) + ADP + phosphate + H(+). Its function is as follows. Part of the ABC transporter complex CcmAB involved in the biogenesis of c-type cytochromes; once thought to export heme, this seems not to be the case, but its exact role is uncertain. Responsible for energy coupling to the transport system. The chain is Cytochrome c biogenesis ATP-binding export protein CcmA from Xanthomonas campestris pv. campestris (strain 8004).